The chain runs to 263 residues: MELYKKGYSARTIAKILGCSKSTVCYRLYKLGITPRRGLDLNPQEIIKLYQNGYTTTEIAKIMKCSHETIRRILRNNNIDIRKSSESLIIKNTKKINLNPSESLAYILGVLNGDGSVNKQESNYVIELKVTDKDFIEEFKRNLENIGFKYINEYVRKFENKKDQYVVRVRSKGFYYWYKSLNVDYYMNVIGNNEKLMISWLKGFYDSEGSVVINKKGNYVYKYVSIANTNRNLIDVCCSFLEKLGIEYSVYCEKNNRYKSGYL.

The 140-residue stretch at 107–246 (ILGVLNGDGS…CCSFLEKLGI (140 aa)) folds into the DOD-type homing endonuclease domain.

This is an uncharacterized protein from Methanocaldococcus jannaschii (strain ATCC 43067 / DSM 2661 / JAL-1 / JCM 10045 / NBRC 100440) (Methanococcus jannaschii).